Consider the following 209-residue polypeptide: Ion-translocating oxidoreductase complex subunit G (209 aa).

The Cytoplasmic segment spans residues 1-8 (MLTAIRKN). A helical membrane pass occupies residues 9-29 (GLILAVFACVSTGLVALTYAL). At 30–209 (TAEQIQQQEQ…HNQPNPCEGQ (180 aa)) the chain is on the periplasmic side. T175 bears the FMN phosphoryl threonine mark.

The protein belongs to the RnfG family. The complex is composed of six subunits: RnfA, RnfB, RnfC, RnfD, RnfE and RnfG. It depends on FMN as a cofactor.

The protein localises to the cell inner membrane. Functionally, part of a membrane-bound complex that couples electron transfer with translocation of ions across the membrane. This chain is Ion-translocating oxidoreductase complex subunit G, found in Vibrio cholerae serotype O1 (strain ATCC 39541 / Classical Ogawa 395 / O395).